The following is a 174-amino-acid chain: Large ribosomal subunit protein bL17 (174 aa).

Belongs to the bacterial ribosomal protein bL17 family. In terms of assembly, part of the 50S ribosomal subunit. Contacts protein L32.

The protein is Large ribosomal subunit protein bL17 of Acetivibrio thermocellus (strain ATCC 27405 / DSM 1237 / JCM 9322 / NBRC 103400 / NCIMB 10682 / NRRL B-4536 / VPI 7372) (Clostridium thermocellum).